A 1198-amino-acid polypeptide reads, in one-letter code: Tetratricopeptide repeat protein 17 (1198 aa).

The stretch at 295 to 328 is one TPR 1 repeat; it reads FTSYYTLGNIYAMLGEYNHSVLCYDHALQAKPGF. Residues 340–382 adopt a coiled-coil conformation; sequence CQQKLEQKLEAQHRSLQRTLNELKEYQKQHDHYLRQQEILEKH. TPR repeat units lie at residues 619–652 and 689–722; these read WLIL…APVQ and PLTF…STKC. Disordered regions lie at residues 774–793 and 902–954; these read LDAA…PVLS and VKKP…YQSL. Positions 902-914 are enriched in basic residues; that stretch reads VKKPKGDHKKPPG. TPR repeat units follow at residues 1071-1105, 1108-1141, and 1142-1175; these read SWVL…APHQ, DVPL…APHF, and AVNH…QPEF.

The protein belongs to the TTC17 family. As to quaternary structure, interacts with CATIP.

Its subcellular location is the cytoplasm. The protein resides in the cell membrane. It is found in the cytoskeleton. In terms of biological role, plays a role in primary ciliogenesis by modulating actin polymerization. The polypeptide is Tetratricopeptide repeat protein 17 (Ttc17) (Mus musculus (Mouse)).